The chain runs to 290 residues: Signal recognition particle receptor FtsY (290 aa).

Residues 91 to 98 (GTNGSGKT), 173 to 177 (DTSGR), and 237 to 240 (TKVD) each bind GTP.

It belongs to the GTP-binding SRP family. FtsY subfamily. As to quaternary structure, part of the signal recognition particle protein translocation system, which is composed of SRP and FtsY.

It is found in the cell inner membrane. It localises to the cytoplasm. The enzyme catalyses GTP + H2O = GDP + phosphate + H(+). Its function is as follows. Involved in targeting and insertion of nascent membrane proteins into the cytoplasmic membrane. Acts as a receptor for the complex formed by the signal recognition particle (SRP) and the ribosome-nascent chain (RNC). The sequence is that of Signal recognition particle receptor FtsY from Chlamydia pneumoniae (Chlamydophila pneumoniae).